Here is an 872-residue protein sequence, read N- to C-terminus: Alanine--tRNA ligase (872 aa).

Zn(2+) is bound by residues His561, His565, Cys662, and His666.

The protein belongs to the class-II aminoacyl-tRNA synthetase family. The cofactor is Zn(2+).

It is found in the cytoplasm. It catalyses the reaction tRNA(Ala) + L-alanine + ATP = L-alanyl-tRNA(Ala) + AMP + diphosphate. In terms of biological role, catalyzes the attachment of alanine to tRNA(Ala) in a two-step reaction: alanine is first activated by ATP to form Ala-AMP and then transferred to the acceptor end of tRNA(Ala). Also edits incorrectly charged Ser-tRNA(Ala) and Gly-tRNA(Ala) via its editing domain. The chain is Alanine--tRNA ligase from Thiobacillus denitrificans (strain ATCC 25259 / T1).